A 109-amino-acid chain; its full sequence is Parvalbumin-7 (109 aa).

Ala2 carries the post-translational modification N-acetylalanine. EF-hand domains follow at residues 39–74 (LSAD…FSAD) and 78–109 (LTDK…LVHE). Residues Asp52, Asp54, Ser56, Phe58, Glu60, Glu63, Asp91, Asp93, Asp95, Lys97, and Glu102 each contribute to the Ca(2+) site.

This sequence belongs to the parvalbumin family.

In muscle, parvalbumin is thought to be involved in relaxation after contraction. It binds two calcium ions. In Danio rerio (Zebrafish), this protein is Parvalbumin-7 (pvalb7).